The sequence spans 167 residues: MSHIEKQAGELQEKLIAVNRVSKTVKGGRIFSFTALTVVGDGNGRVGFGYGKAREVPAAIQKAMEKARRAMINVALNNGTLQHPVKGAHTGSRVFMQPASEGTGIIAGGAMRAVLEVAGVHNVLAKAYGSTNPINVVRATIAALEDMKSPEMVAAKRGKSVEEILGK.

The S5 DRBM domain occupies 11-74 (LQEKLIAVNR…EKARRAMINV (64 aa)).

This sequence belongs to the universal ribosomal protein uS5 family. Part of the 30S ribosomal subunit. Contacts proteins S4 and S8.

With S4 and S12 plays an important role in translational accuracy. Its function is as follows. Located at the back of the 30S subunit body where it stabilizes the conformation of the head with respect to the body. The chain is Small ribosomal subunit protein uS5 from Yersinia pseudotuberculosis serotype O:1b (strain IP 31758).